The chain runs to 460 residues: Xyloglucan 6-xylosyltransferase 1 (460 aa).

Over 1-20 the chain is Cytoplasmic; that stretch reads MIEKCIGAHRFRRLQRFMRQ. A helical; Signal-anchor for type II membrane protein membrane pass occupies residues 21–40; that stretch reads GKVTILCLVLTVIVLRGTIG. The Lumenal portion of the chain corresponds to 41–460; sequence AGKFGTPEKD…KAAKLSTTTT (420 aa). Residues Gly-156 and 227 to 229 each bind UDP-alpha-D-xylose; that span reads DSD. Mn(2+)-binding residues include Asp-227 and Asp-229. A substrate-binding site is contributed by His-346. UDP-alpha-D-xylose is bound by residues His-377, Gly-380, and Lys-382. Mn(2+) is bound at residue His-377. Substrate is bound by residues Lys-382 and 389-390; that span reads DY. Asn-431 is a glycosylation site (N-linked (GlcNAc...) asparagine).

Belongs to the glycosyltransferase 34 family. Forms homodimer. Interacts with XXT2. Requires Mn(2+) as cofactor.

Its subcellular location is the golgi apparatus membrane. It catalyses the reaction Transfers an alpha-D-xylosyl residue from UDP-D-xylose to a glucose residue in xyloglucan, forming an alpha-(1-&gt;6)-D-xylosyl-D-glucose linkage.. It functions in the pathway protein modification; protein glycosylation. Functionally, xylosyltransferase specific to UDP-D-xylose that accepts both cellopentaose and cellohexaose as substrates, with a better use of cellohexaose, to produce xyloglucan. Adds preferentially the first xylosyl residue to the fourth glucosyl residue from the reducing end of both acceptors. Transfer one xylose mainly to the second glucose residue from the non-reducing end. The acceptor should have a minimum of four glucose residues. This Arabidopsis thaliana (Mouse-ear cress) protein is Xyloglucan 6-xylosyltransferase 1.